Reading from the N-terminus, the 470-residue chain is ATP synthase subunit beta (470 aa).

155 to 162 (GGAGVGKT) lines the ATP pocket.

It belongs to the ATPase alpha/beta chains family. As to quaternary structure, F-type ATPases have 2 components, CF(1) - the catalytic core - and CF(0) - the membrane proton channel. CF(1) has five subunits: alpha(3), beta(3), gamma(1), delta(1), epsilon(1). CF(0) has three main subunits: a(1), b(2) and c(9-12). The alpha and beta chains form an alternating ring which encloses part of the gamma chain. CF(1) is attached to CF(0) by a central stalk formed by the gamma and epsilon chains, while a peripheral stalk is formed by the delta and b chains.

Its subcellular location is the cell membrane. It carries out the reaction ATP + H2O + 4 H(+)(in) = ADP + phosphate + 5 H(+)(out). Its function is as follows. Produces ATP from ADP in the presence of a proton gradient across the membrane. The catalytic sites are hosted primarily by the beta subunits. This Staphylococcus epidermidis (strain ATCC 35984 / DSM 28319 / BCRC 17069 / CCUG 31568 / BM 3577 / RP62A) protein is ATP synthase subunit beta.